The following is a 694-amino-acid chain: GRB2-associated-binding protein 1 (694 aa).

Residue S2 is modified to N-acetylserine. One can recognise a PH domain in the interval 5 to 116 (EVVCSGWLRK…WVRCICDICG (112 aa)). Disordered regions lie at residues 122-164 (EDPV…PYQL) and 194-231 (PEPT…SKHG). The span at 145–157 (APPSTQADSSSAT) shows a compositional bias: polar residues. The segment covering 194–203 (PEPTRTHADS) has biased composition (basic and acidic residues). Positions 204–231 (AKSTSSETDCNDNVPSHKNPASSQSKHG) are enriched in polar residues. Residues S251, S253, S266, and S304 each carry the phosphoserine modification. A disordered region spans residues 323-386 (FPEGTLGQTS…TAGMSPSRSN (64 aa)). Residues 362–386 (IPRTASDTDSSYCIPTAGMSPSRSN) are compositionally biased toward polar residues. Residue T387 is modified to Phosphothreonine. Phosphoserine occurs at positions 402 and 454. Disordered stretches follow at residues 493–532 (AHMG…VKPA) and 544–656 (ELQA…ADER). Residue A547 is modified to Phosphoserine. A compositionally biased stretch (polar residues) spans 594–611 (PNLSSEDPNLFGSNSLDG). Y627 is subject to Phosphotyrosine. Phosphothreonine is present on T638. Phosphoserine is present on S651. Y659 bears the Phosphotyrosine mark. The segment at 671–694 (KSTREAWTDGRQSTESETPAKSVK) is disordered. Residues 672 to 684 (STREAWTDGRQST) are compositionally biased toward basic and acidic residues. S683 bears the Phosphoserine mark. A compositionally biased stretch (polar residues) spans 685–694 (ESETPAKSVK).

Belongs to the GAB family. As to quaternary structure, identified in a complex containing FRS2, GRB2, GAB1, PIK3R1 and SOS1. Forms a tripartite complex containing GAB1, METTL13 and SPRY2. Within the complex interacts with METTL13. Interacts with GRB2 and with other SH2-containing proteins. Interacts with phosphorylated LAT2. Interacts with PTPRJ. Interacts (phosphorylated) with PTPN11. Interacts with HCK. In terms of processing, phosphorylated in response to FGFR1 activation. Phosphorylated on tyrosine residue(s) by the epidermal growth factor receptor (EGFR) and the insulin receptor (INSR). Tyrosine phosphorylation of GAB1 mediates interaction with several proteins that contain SH2 domains. Phosphorylated on tyrosine residues by HCK upon IL6 signaling.

In terms of biological role, adapter protein that plays a role in intracellular signaling cascades triggered by activated receptor-type kinases. Plays a role in FGFR1 signaling. Probably involved in signaling by the epidermal growth factor receptor (EGFR) and the insulin receptor (INSR). Involved in the MET/HGF-signaling pathway. In Homo sapiens (Human), this protein is GRB2-associated-binding protein 1 (GAB1).